The chain runs to 132 residues: MKKVLALIVAATMGLSSVAFAAETTAAATAAPAATSTTAAPAVEKAAPAKATHHKKHKATKQTTEQKAQAAKKAVKKAPAQKAQAAKKAVKKAPVQKAQAAKKHVKKAPAQKAQAAKKHHKTAKKSATAPAA.

An N-terminal signal peptide occupies residues M1–A21. A propeptide spanning residues A22–Q69 is cleaved from the precursor. The span at A30–K50 shows a compositional bias: low complexity. The segment at A30–A132 is disordered. The segment covering A51–T60 has biased composition (basic residues). Positions K61 to Q99 are enriched in low complexity. Residues A100–K124 are compositionally biased toward basic residues.

Belongs to the Asr family. Post-translationally, proteolytic processing gives rise to the active protein.

It localises to the periplasm. Its function is as follows. Required for growth and/or survival at acidic conditions. The chain is Acid shock protein from Yersinia enterocolitica serotype O:8 / biotype 1B (strain NCTC 13174 / 8081).